Consider the following 555-residue polypeptide: Probable Xaa-Pro aminopeptidase BC1G_13431 (555 aa).

Residues D303, D314, E458, and E499 each contribute to the Mn(2+) site. The disordered stretch occupies residues 527-555 (EGKEQEEEEEREANRKATESRKQKKTWFW). The span at 538–547 (EANRKATESR) shows a compositional bias: basic and acidic residues.

It belongs to the peptidase M24B family. The cofactor is Mn(2+).

The catalysed reaction is Release of any N-terminal amino acid, including proline, that is linked to proline, even from a dipeptide or tripeptide.. Its function is as follows. Catalyzes the removal of a penultimate prolyl residue from the N-termini of peptides. The chain is Probable Xaa-Pro aminopeptidase BC1G_13431 from Botryotinia fuckeliana (strain B05.10) (Noble rot fungus).